Consider the following 208-residue polypeptide: Protein GrpE (208 aa).

Residues 1–27 (MERMNQSRKVPIHDAAEESSAEAHETQ) are compositionally biased toward basic and acidic residues. The tract at residues 1-65 (MERMNQSRKV…AEEAQEEEAA (65 aa)) is disordered. A compositionally biased stretch (acidic residues) spans 45–64 (MAEEAVEQAQDAEEAQEEEA).

This sequence belongs to the GrpE family. Homodimer.

It localises to the cytoplasm. In terms of biological role, participates actively in the response to hyperosmotic and heat shock by preventing the aggregation of stress-denatured proteins, in association with DnaK and GrpE. It is the nucleotide exchange factor for DnaK and may function as a thermosensor. Unfolded proteins bind initially to DnaJ; upon interaction with the DnaJ-bound protein, DnaK hydrolyzes its bound ATP, resulting in the formation of a stable complex. GrpE releases ADP from DnaK; ATP binding to DnaK triggers the release of the substrate protein, thus completing the reaction cycle. Several rounds of ATP-dependent interactions between DnaJ, DnaK and GrpE are required for fully efficient folding. The protein is Protein GrpE of Desulfatibacillum aliphaticivorans.